Reading from the N-terminus, the 301-residue chain is Protein FAM221A (301 aa).

The disordered stretch occupies residues 235–271; that stretch reads MHAPSTSSPQPLAGGNEVGPSTQLSSLRKPEEDDMAY.

It belongs to the FAM221 family.

This chain is Protein FAM221A (Fam221a), found in Mus musculus (Mouse).